We begin with the raw amino-acid sequence, 1112 residues long: Zinc finger protein 654 (1112 aa).

Positions 482 to 514 (PSSSLKKRVDQQSVEEDQSTGETDPDDASVVQP) are disordered. Positions 494-508 (SVEEDQSTGETDPDD) are enriched in acidic residues. 5 C2H2-type zinc fingers span residues 566–588 (FACV…LKNH), 738–763 (FKCP…RTVH), 779–801 (GKCK…LNRH), 807–831 (YFCL…TKSH), and 836–860 (AQCS…EAQH). 2 disordered regions span residues 885–906 (FSNE…KYST) and 997–1018 (VESQ…NLTS). Polar residues-rich tracts occupy residues 886-899 (SNEN…VSTS) and 1002-1018 (HSAL…NLTS). Ser1107 and Ser1111 each carry phosphoserine.

It belongs to the krueppel C2H2-type zinc-finger protein family.

Its subcellular location is the nucleus. Functionally, may be involved in transcriptional regulation. The polypeptide is Zinc finger protein 654 (Mus musculus (Mouse)).